A 190-amino-acid chain; its full sequence is MDKRILAETFRLIKQKGFSFTMNDLAAALGTSKRTLYAYYSSKDQLVEAVVEQFIAEMKQIERDIYENESLNVLEKVKQMLISLPQGMELLNMGLLNELKKYHYDAWLTLDAFIKEEWAIVLALLNECKQQKRIRNINPDLFVHMYIGSINQVYDPEYPLKHQFTTGEVLESIVDVLFNGITADEEADAT.

Residues 1-58 (MDKRILAETFRLIKQKGFSFTMNDLAAALGTSKRTLYAYYSSKDQLVEAVVEQFIAEM) enclose the HTH tetR-type domain. The H-T-H motif DNA-binding region spans 21 to 40 (TMNDLAAALGTSKRTLYAYY).

This is an uncharacterized protein from Bacillus subtilis (strain 168).